Here is a 709-residue protein sequence, read N- to C-terminus: Elongation factor G (709 aa).

One can recognise a tr-type G domain in the interval 9 to 295; the sequence is AKVRNIGIMA…AVVRYLPTPL (287 aa). GTP-binding positions include 18 to 25, 86 to 90, and 140 to 143; these read AHIDAGKT, DTPGH, and NKLD.

Belongs to the TRAFAC class translation factor GTPase superfamily. Classic translation factor GTPase family. EF-G/EF-2 subfamily.

It is found in the cytoplasm. Its function is as follows. Catalyzes the GTP-dependent ribosomal translocation step during translation elongation. During this step, the ribosome changes from the pre-translocational (PRE) to the post-translocational (POST) state as the newly formed A-site-bound peptidyl-tRNA and P-site-bound deacylated tRNA move to the P and E sites, respectively. Catalyzes the coordinated movement of the two tRNA molecules, the mRNA and conformational changes in the ribosome. The protein is Elongation factor G of Streptomyces avermitilis (strain ATCC 31267 / DSM 46492 / JCM 5070 / NBRC 14893 / NCIMB 12804 / NRRL 8165 / MA-4680).